The chain runs to 92 residues: DNA-directed RNA polymerase subunit Rpo5 (92 aa).

The protein belongs to the archaeal Rpo5/eukaryotic RPB5 RNA polymerase subunit family. As to quaternary structure, part of the RNA polymerase complex.

Its subcellular location is the cytoplasm. The catalysed reaction is RNA(n) + a ribonucleoside 5'-triphosphate = RNA(n+1) + diphosphate. Functionally, DNA-dependent RNA polymerase (RNAP) catalyzes the transcription of DNA into RNA using the four ribonucleoside triphosphates as substrates. This is DNA-directed RNA polymerase subunit Rpo5 from Methanopyrus kandleri (strain AV19 / DSM 6324 / JCM 9639 / NBRC 100938).